The sequence spans 415 residues: MKGSYKSRWVIVIVVVIAAIAAFWFWQGRNESQSAAPGATKQAQQSPAGGRRGMRSGPLAPVQAATAVEQAVPRYLTGLGTITAANTVTVRSRVDGQLMALHFQEGQQVKAGDLLAEIDPSQFKVALAQAQGQLAKDKATLANARRDLARYQQLAKTNLVSRQELDAQQALVSETEGTFKADEASVASAQLQLDWSRITAPVDGRVGLKQVDVGNQISSGDTTGIVVITQTHPIDLLFTLPESDITTVVQAQKAGKPLVVEAWDRTNSKKLSEGTLLSLDNQIDATTGTIKVKARFNNQDDALFPNQFVNARMLVDTEQNAVVIPTAALQMGNEGHFVWVLNSENKVSKHLVTPGIQDSQKVVIRAGISAGDRVVTDGIDRLTEGAKVEVVEAQSATTPEEKATSREYAKKGARS.

The first 21 residues, 1–21 (MKGSYKSRWVIVIVVVIAAIA), serve as a signal peptide directing secretion. Residues 34-47 (SAAPGATKQAQQSP) show a composition bias toward polar residues. Disordered regions lie at residues 34–60 (SAAP…GPLA) and 392–415 (EAQS…GARS). Positions 399–415 (PEEKATSREYAKKGARS) are enriched in basic and acidic residues.

This sequence belongs to the membrane fusion protein (MFP) (TC 8.A.1) family. Part of a tripartite efflux system composed of MdtA, MdtB and MdtC.

It is found in the cell inner membrane. Functionally, the MdtABC tripartite complex confers resistance against novobiocin and deoxycholate. The sequence is that of Multidrug resistance protein MdtA from Escherichia fergusonii (strain ATCC 35469 / DSM 13698 / CCUG 18766 / IAM 14443 / JCM 21226 / LMG 7866 / NBRC 102419 / NCTC 12128 / CDC 0568-73).